A 365-amino-acid polypeptide reads, in one-letter code: Histidinol-phosphate aminotransferase (365 aa).

K223 carries the N6-(pyridoxal phosphate)lysine modification.

The protein belongs to the class-II pyridoxal-phosphate-dependent aminotransferase family. Histidinol-phosphate aminotransferase subfamily. Homodimer. It depends on pyridoxal 5'-phosphate as a cofactor.

It carries out the reaction L-histidinol phosphate + 2-oxoglutarate = 3-(imidazol-4-yl)-2-oxopropyl phosphate + L-glutamate. It functions in the pathway amino-acid biosynthesis; L-histidine biosynthesis; L-histidine from 5-phospho-alpha-D-ribose 1-diphosphate: step 7/9. This chain is Histidinol-phosphate aminotransferase, found in Brucella melitensis biotype 1 (strain ATCC 23456 / CCUG 17765 / NCTC 10094 / 16M).